Reading from the N-terminus, the 707-residue chain is Elongation factor G (707 aa).

A tr-type G domain is found at 8-297; the sequence is ERVRNIGIAA…AVLDYLPSPL (290 aa). Residues 17–24, 96–100, and 150–153 each bind GTP; these read AHIDAGKT, DTPGH, and NKMD.

Belongs to the TRAFAC class translation factor GTPase superfamily. Classic translation factor GTPase family. EF-G/EF-2 subfamily.

Its subcellular location is the cytoplasm. In terms of biological role, catalyzes the GTP-dependent ribosomal translocation step during translation elongation. During this step, the ribosome changes from the pre-translocational (PRE) to the post-translocational (POST) state as the newly formed A-site-bound peptidyl-tRNA and P-site-bound deacylated tRNA move to the P and E sites, respectively. Catalyzes the coordinated movement of the two tRNA molecules, the mRNA and conformational changes in the ribosome. The sequence is that of Elongation factor G from Gloeobacter violaceus (strain ATCC 29082 / PCC 7421).